The following is a 249-amino-acid chain: Small ribosomal subunit protein eS6 (249 aa).

Lys14 is covalently cross-linked (Glycyl lysine isopeptide (Lys-Gly) (interchain with G-Cter in SUMO2)). An ADP-ribosyl glutamic acid modification is found at Glu35. Arg137 carries the post-translational modification (3R)-3-hydroxyarginine. Ser148 carries the phosphoserine modification. An N6-acetyllysine modification is found at Lys211. Basic and acidic residues predominate over residues 217-229 (MKEAKEKRQEQIA). The tract at residues 217–249 (MKEAKEKRQEQIAKRRRLSSLRASTSKSESSQK) is disordered. Residues Ser235 and Ser236 each carry the phosphoserine; by RPS6KA1, RPS6KA3, DAPK1 and PASK modification. Residues 236 to 249 (SLRASTSKSESSQK) are compositionally biased toward low complexity. Residues Ser240, Ser242, Ser244, and Ser247 each carry the phosphoserine modification.

It belongs to the eukaryotic ribosomal protein eS6 family. In terms of assembly, component of the small ribosomal subunit. Part of the small subunit (SSU) processome, composed of more than 70 proteins and the RNA chaperone small nucleolar RNA (snoRNA) U3. In terms of processing, ribosomal protein S6 is the major substrate of protein kinases in eukaryote ribosomes. The phosphorylation is stimulated by growth factors, tumor promoting agents, and mitogens. It is dephosphorylated at growth arrest. Phosphorylated at Ser-235 and Ser-236 by RPS6KA1 and RPS6KA3; phosphorylation at these sites facilitates the assembly of the pre-initiation complex. Post-translationally, specifically hydroxylated (with R stereochemistry) at C-3 of Arg-137 by KDM8. Mono-ADP-ribosylation at Glu-35 by PARP16 inhibits polysome assembly and mRNA loading, thereby inhibiting protein translation.

Its subcellular location is the cytoplasm. The protein resides in the nucleus. The protein localises to the nucleolus. Component of the 40S small ribosomal subunit. Plays an important role in controlling cell growth and proliferation through the selective translation of particular classes of mRNA. Part of the small subunit (SSU) processome, first precursor of the small eukaryotic ribosomal subunit. During the assembly of the SSU processome in the nucleolus, many ribosome biogenesis factors, an RNA chaperone and ribosomal proteins associate with the nascent pre-rRNA and work in concert to generate RNA folding, modifications, rearrangements and cleavage as well as targeted degradation of pre-ribosomal RNA by the RNA exosome. The protein is Small ribosomal subunit protein eS6 (RPS6) of Bos taurus (Bovine).